The chain runs to 156 residues: Small ribosomal subunit protein uS7 (156 aa).

It belongs to the universal ribosomal protein uS7 family. As to quaternary structure, part of the 30S ribosomal subunit. Contacts proteins S9 and S11.

Functionally, one of the primary rRNA binding proteins, it binds directly to 16S rRNA where it nucleates assembly of the head domain of the 30S subunit. Is located at the subunit interface close to the decoding center, probably blocks exit of the E-site tRNA. This chain is Small ribosomal subunit protein uS7, found in Solibacter usitatus (strain Ellin6076).